The chain runs to 388 residues: G2/mitotic-specific cyclin-B2 (388 aa).

The disordered stretch occupies residues 46–67 (ATNGKVGPSKKPSKASCVQKPK).

It belongs to the cyclin family. Cyclin AB subfamily. Interacts with the CDK1 protein kinase to form a serine/threonine kinase holoenzyme complex also known as maturation promoting factor (MPF). The cyclin subunit imparts substrate specificity to the complex.

Its function is as follows. Essential for the control of the cell cycle at the G2/M (mitosis) transition. In Oryzias curvinotus (Hynann ricefish), this protein is G2/mitotic-specific cyclin-B2 (ccnb2).